The sequence spans 529 residues: Bifunctional purine biosynthesis protein PurH (529 aa).

The region spanning M1–V148 is the MGS-like domain.

It belongs to the PurH family.

It carries out the reaction (6R)-10-formyltetrahydrofolate + 5-amino-1-(5-phospho-beta-D-ribosyl)imidazole-4-carboxamide = 5-formamido-1-(5-phospho-D-ribosyl)imidazole-4-carboxamide + (6S)-5,6,7,8-tetrahydrofolate. The enzyme catalyses IMP + H2O = 5-formamido-1-(5-phospho-D-ribosyl)imidazole-4-carboxamide. It functions in the pathway purine metabolism; IMP biosynthesis via de novo pathway; 5-formamido-1-(5-phospho-D-ribosyl)imidazole-4-carboxamide from 5-amino-1-(5-phospho-D-ribosyl)imidazole-4-carboxamide (10-formyl THF route): step 1/1. Its pathway is purine metabolism; IMP biosynthesis via de novo pathway; IMP from 5-formamido-1-(5-phospho-D-ribosyl)imidazole-4-carboxamide: step 1/1. The chain is Bifunctional purine biosynthesis protein PurH from Salmonella heidelberg (strain SL476).